The chain runs to 238 residues: Small ribosomal subunit protein uS3 (238 aa).

A KH type-2 domain is found at 39-109 (IRTFINQQLA…TIKVNVVEVN (71 aa)). Residues 215 to 238 (EAVPREATRRSPQRRLPQFENRSN) are disordered.

Belongs to the universal ribosomal protein uS3 family. Part of the 30S ribosomal subunit. Forms a tight complex with proteins S10 and S14.

Functionally, binds the lower part of the 30S subunit head. Binds mRNA in the 70S ribosome, positioning it for translation. This is Small ribosomal subunit protein uS3 from Thermosynechococcus vestitus (strain NIES-2133 / IAM M-273 / BP-1).